A 930-amino-acid polypeptide reads, in one-letter code: Polypeptide N-acetylgalactosaminyltransferase 5 (930 aa).

Topologically, residues 1–12 (MNKIRKFFRGSG) are cytoplasmic. Residues 13-35 (RVLAFIFAASVIWLLFDMAALRL) form a helical; Signal-anchor for type II membrane protein membrane-spanning segment. Topologically, residues 36-930 (SFSEINAGLL…KWKFEKYYEV (895 aa)) are lumenal. Residues 190-209 (KQEAPQNYNVSSDTSKQASE) form a disordered region. Positions 193–209 (APQNYNVSSDTSKQASE) are enriched in polar residues. Residues asparagine 198, asparagine 213, and asparagine 283 are each glycosylated (N-linked (GlcNAc...) asparagine). Serine 285 carries the post-translational modification Phosphoserine. N-linked (GlcNAc...) asparagine glycans are attached at residues asparagine 287, asparagine 309, asparagine 355, and asparagine 387. The interval 327-381 (DTKEVPNSKTQTVFPKLLGGSPHKQIPRNQSKTSSSPPALKKAVSQSKPTISGGL) is disordered. Residues 353–363 (PRNQSKTSSSP) show a composition bias toward polar residues. Disulfide bonds link cysteine 476-cysteine 708, cysteine 699-cysteine 779, and cysteine 812-cysteine 825. The interval 485 to 594 (LPTTSIIMCF…VGWLEPLLER (110 aa)) is catalytic subdomain A. 2 residues coordinate substrate: aspartate 526 and arginine 555. Asparagine 568 carries N-linked (GlcNAc...) asparagine glycosylation. Aspartate 578 lines the Mn(2+) pocket. Serine 579 contributes to the substrate binding site. Mn(2+) is bound at residue histidine 580. The segment at 654-716 (IIRCPVMAGG…PCSRVGHIFR (63 aa)) is catalytic subdomain B. Tryptophan 685 is a binding site for substrate. Histidine 713 is a binding site for Mn(2+). 2 residues coordinate substrate: arginine 716 and tyrosine 721. N-linked (GlcNAc...) asparagine glycans are attached at residues asparagine 766, asparagine 817, and asparagine 835. The Ricin B-type lectin domain occupies 794–925 (KAPVVRASGV…MELQQKWKFE (132 aa)). 2 cysteine pairs are disulfide-bonded: cysteine 848/cysteine 863 and cysteine 898/cysteine 913. The N-linked (GlcNAc...) asparagine glycan is linked to asparagine 902.

This sequence belongs to the glycosyltransferase 2 family. GalNAc-T subfamily. In terms of assembly, interacts with EXT2. Does not interact with EXT1, EXTL1 or EXTL3. It depends on Mn(2+) as a cofactor. In terms of tissue distribution, expressed at low level. Not expressed before E7.5 during embryogenesis. Expressed in dental mesenchyme and tongue. Accumulates in a subset of mesenchymal cells at the ventral-most portions of the 12.5 dpc maxilla and mandible underlying the dental lamina.

It is found in the golgi apparatus membrane. It catalyses the reaction L-seryl-[protein] + UDP-N-acetyl-alpha-D-galactosamine = a 3-O-[N-acetyl-alpha-D-galactosaminyl]-L-seryl-[protein] + UDP + H(+). It carries out the reaction L-threonyl-[protein] + UDP-N-acetyl-alpha-D-galactosamine = a 3-O-[N-acetyl-alpha-D-galactosaminyl]-L-threonyl-[protein] + UDP + H(+). It participates in protein modification; protein glycosylation. Catalyzes the initial reaction in O-linked oligosaccharide biosynthesis, the transfer of an N-acetyl-D-galactosamine residue to a serine or threonine residue on the protein receptor. Has activity toward EA2 peptide substrate, but has a weak activity toward Muc2 or Muc1b substrates. The sequence is that of Polypeptide N-acetylgalactosaminyltransferase 5 (Galnt5) from Mus musculus (Mouse).